Here is a 371-residue protein sequence, read N- to C-terminus: uncharacterized protein (371 aa).

This sequence belongs to the glycerate kinase type-1 family.

This is an uncharacterized protein from Synechocystis sp. (strain ATCC 27184 / PCC 6803 / Kazusa).